A 338-amino-acid chain; its full sequence is Ketol-acid reductoisomerase (NADP(+)) (338 aa).

Residues M1–T181 enclose the KARI N-terminal Rossmann domain. NADP(+)-binding positions include Y24–Q27, R47, and S52. The active site involves H107. G133 contributes to the NADP(+) binding site. The KARI C-terminal knotted domain maps to N182–I327. Residues D190, E194, E226, and E230 each contribute to the Mg(2+) site. S251 contributes to the substrate binding site.

The protein belongs to the ketol-acid reductoisomerase family. It depends on Mg(2+) as a cofactor.

It carries out the reaction (2R)-2,3-dihydroxy-3-methylbutanoate + NADP(+) = (2S)-2-acetolactate + NADPH + H(+). The catalysed reaction is (2R,3R)-2,3-dihydroxy-3-methylpentanoate + NADP(+) = (S)-2-ethyl-2-hydroxy-3-oxobutanoate + NADPH + H(+). It participates in amino-acid biosynthesis; L-isoleucine biosynthesis; L-isoleucine from 2-oxobutanoate: step 2/4. The protein operates within amino-acid biosynthesis; L-valine biosynthesis; L-valine from pyruvate: step 2/4. Its function is as follows. Involved in the biosynthesis of branched-chain amino acids (BCAA). Catalyzes an alkyl-migration followed by a ketol-acid reduction of (S)-2-acetolactate (S2AL) to yield (R)-2,3-dihydroxy-isovalerate. In the isomerase reaction, S2AL is rearranged via a Mg-dependent methyl migration to produce 3-hydroxy-3-methyl-2-ketobutyrate (HMKB). In the reductase reaction, this 2-ketoacid undergoes a metal-dependent reduction by NADPH to yield (R)-2,3-dihydroxy-isovalerate. The sequence is that of Ketol-acid reductoisomerase (NADP(+)) from Polynucleobacter necessarius subsp. necessarius (strain STIR1).